The following is a 469-amino-acid chain: Ectonucleoside triphosphate diphosphohydrolase 5 (469 aa).

The signal sequence occupies residues 1–24 (MATPWGAVFFLLMIACAGSTVFYR). Glutamate 172 acts as the Proton acceptor in catalysis. Residue asparagine 232 is glycosylated (N-linked (GlcNAc...) asparagine). 2 disulfides stabilise this stretch: cysteine 272–cysteine 303 and cysteine 363–cysteine 377.

Belongs to the GDA1/CD39 NTPase family. In terms of assembly, monomer; active form. Homodimer; disulfide-linked. Homodimers are enzymatically inactive. The cofactor is Ca(2+). Requires Mg(2+) as cofactor. In terms of processing, N-glycosylated; high-mannose type. As to expression, expressed in fetal cells and most adult tissues.

The protein resides in the endoplasmic reticulum. The protein localises to the secreted. The catalysed reaction is a ribonucleoside 5'-diphosphate + H2O = a ribonucleoside 5'-phosphate + phosphate + H(+). It catalyses the reaction GDP + H2O = GMP + phosphate + H(+). The enzyme catalyses UDP + H2O = UMP + phosphate + H(+). It carries out the reaction IDP + H2O = IMP + phosphate + H(+). The catalysed reaction is CDP + H2O = CMP + phosphate + H(+). It catalyses the reaction ADP + H2O = AMP + phosphate + H(+). The protein operates within protein modification; protein glycosylation. Functionally, hydrolyzes nucleoside diphosphates with a preference for GDP, IDP and UDP compared to ADP and CDP. In the lumen of the endoplasmic reticulum, hydrolyzes UDP that acts as an end-product feedback inhibitor of the UDP-Glc:glycoprotein glucosyltransferases. UMP can be transported back by an UDP-sugar antiporter to the cytosol where it is consumed to regenerate UDP-glucose. Therefore, it positively regulates protein reglucosylation by clearing UDP from the ER lumen and by promoting the regeneration of UDP-glucose. Protein reglucosylation is essential to proper glycoprotein folding and quality control in the ER. This is Ectonucleoside triphosphate diphosphohydrolase 5 (ENTPD5) from Mesocricetus auratus (Golden hamster).